We begin with the raw amino-acid sequence, 74 residues long: O-conotoxin GeXXXIA (74 aa).

The signal sequence occupies residues Met-1–Ala-22. The propeptide occupies Val-23 to Arg-33.

The protein belongs to the conotoxin O1 superfamily. As to quaternary structure, homodimer; disulfide-linked. In terms of processing, may contain 2 intrachain disulfide bonds and probably one interchain disulfide bond forming the homodimer. The disulfide pairing is not important for activity towards the different nAChR subtypes, since this peptide without disulfide bond or with different disulfide bonds shows the same activity. Expressed by the venom duct.

Its subcellular location is the secreted. Its function is as follows. The activity of this natural homodimer has not been tested due to low abundance. The synthetic linear peptide has been refolded, giving 4 different monomeric isomers (m1 to m4) with 2 disulfide bonds each. All isomers potently inhibit rat alpha-1-beta-1-delta-epsilon/CHRNA1-CHRNB1-CHRND-CHRNE and human alpha-9-alpha-10/CHRNA9-CHRNA10 nicotinic acetylcholine receptors (nAChR). In addition, they show a modest inhibition at human alpha-3-beta-2/CHRNA3-CHRNB2, alpha-3-beta-4/CHRNA3-CHRNB4, alpha-7/CHRNA7, and alpha-4-beta-4/CHRNA4-CHRNB4. The synthetic monomer peptide without disulfide bonds shows a potent activity on alpha-9-alpha-10/CHRNA9 and CHRNA10 (IC(50)=16.2 nM). This linear peptide does not act as a competitive antagonist, or as a channel pore blocker of nAChR. The sequence is that of O-conotoxin GeXXXIA from Conus generalis (General cone).